Reading from the N-terminus, the 448-residue chain is Beclin-1 (448 aa).

At methionine 1 the chain carries N-acetylmethionine. A phosphoserine mark is found at serine 14 and serine 29. Positions 47–72 (TTAQAKPGESQEEEANSGEEPFIETR) are disordered. Phosphoserine; by AMPK is present on residues serine 88, serine 91, and serine 94. Positions 106–125 (TMENLSRRLKVTGDLFDIMS) match the BH3 motif. Residues 110-157 (LSRRLKVTGDLFDIMSGQTDVDHPLCEECTDTLLDQLDTQLNVTENEC) are interaction with BCL2 and BCL2L1 isoform Bcl-X(L). The residue at position 117 (threonine 117) is a Phosphothreonine; by DAPK1. A coiled-coil region spans residues 140–267 (DTLLDQLDTQ…QLDKLKKTNV (128 aa)). The evolutionary conserved domain (ECD) stretch occupies residues 243–448 (DELKSVENQM…AWVSSQFYNK (206 aa)). Glycyl lysine isopeptide (Lys-Gly) (interchain with G-Cter in ubiquitin) cross-links involve residues lysine 400 and lysine 435. Residues 423–448 (WTKALKFMLTNLKWGLAWVSSQFYNK) are required for membrane-association.

This sequence belongs to the beclin family. In terms of assembly, a homodimeric form is proposed to exist; this metastable form readily transits to ATG14- or UVRAG-containing complexes with BECN1:UVRAG being more stable than BECN1:ATG14. Component of the PI3K (PI3KC3/PI3K-III/class III phosphatidylinositol 3-kinase) complex the core of which is composed of the catalytic subunit PIK3C3, the regulatory subunit PIK3R4 and BECN1 associating with additional regulatory/auxiliary subunits to form alternative complex forms. Alternative complex forms containing a fourth regulatory subunit in a mutually exclusive manner are PI3K complex I (PI3KC3-C1) containing ATG14, and PI3K complex II (PI3KC3-C2) containing UVRAG. PI3KC3-C1 displays a V-shaped architecture with PIK3R4 serving as a bridge between PIK3C3 and the ATG14:BECN1 subcomplex. Both, PI3KC3-C1 and PI3KC3-C2, can associate with further regulatory subunits, such as RUBCN, SH3GLB1/Bif-1 and AMBRA1. PI3KC3-C1 probably associates with PIK3CB. Forms a complex with PPP2CA and AMBRA1; AMBRA1 and BECN1 components of the complex regulate MYC stability via different pathways. Component of the complex, at least composed of LRPPRC, BECN1 and BCL2; the interactions prevent BECN1 from forming an autophagy-inducing complex with PIK3C3. Interacts with AMBRA1, GOPC, GRID2. Interacts with BCL2 and BCL2L1 isoform Bcl-X(L); the interaction inhibits BECN1 function in promoting autophagy by interfering with the formation of the PI3K complex. Interacts with cytosolic HMGB1; inhibits the interaction of BECN1 and BCL2 leading to promotion of autophagy. Interacts with USP10, USP13, DAPK1, RAB39A. Interacts with SLAMF1. Interacts with the poly-Gln domain of ATXN3; the interaction causes deubiquitination at Lys-400 and stabilizes BECN1. Interacts with VMP1. Interacts with TRIM5; the interaction causes activation of BECN1 by causing its dissociation from its inhibitors BCL2 and TAB2. Interacts with active ULK1 (phosphorylated on 'Ser-317') and MEFV simultaneously. Interacts with WDR81 and WDR91; negatively regulates the PI3 kinase/PI3K activity associated with endosomal membranes. Interacts with LAPTM4B; competes with EGFR for LAPTM4B binding; regulates EGFR activity. Interacts with TRIM50. Interacts with TRIM16. Interacts with ATG14; this interaction is increased in the absence of TMEM39A. Interacts with WASHC1; preventing interaction with AMBRA1 and the DCX(AMBRA1) complex and subsequent ubiquitination. Interacts with TRIM17. Interacts with BCL2L10/BCL-B (via BH1 domain). Interacts with SH3BGRL. Interacts with IRGM; enhancing BECN1-interacting partners and influencing the composition of the BECN1 complex. Interacts with ARMC3. Interacts with LRPPRC. Post-translationally, phosphorylation at Thr-117 by DAPK1 reduces its interaction with BCL2 and BCL2L1 and promotes induction of autophagy. In response to autophagic stimuli, phosphorylated at serine residues by AMPK in an ATG14-dependent manner, and this phosphorylation is critical for maximally efficient autophagy. Polyubiquitinated by NEDD4, both with 'Lys-11'- and 'Lys-63'-linkages. 'Lys-11'-linked polyubiquitination leads to degradation and is enhanced when the stabilizing interaction partner VPS34 is depleted. Deubiquitinated by USP10 and USP13, leading to stabilize the PIK3C3/VPS34-containing complexes. Polyubiquitinated at Lys-400 with 'Lys-48'-linkages. 'Lys-48'-linked polyubiquitination of Lys-400 leads to degradation. Deubiquitinated by ATXN3, leading to stabilization. Ubiquitinated at Lys-435 via 'Lys-63'-linkage by the DCX(AMBRA1) complex, thereby increasing the association between BECN1 and PIK3C3 to promote PIK3C3 activity. 'Lys-48'-linked ubiquitination by RNF216 leads to proteasomal degradation and autophagy inhibition. In terms of processing, proteolytically processed by caspases including CASP8 and CASP3; the C-terminal fragments lack autophagy-inducing capacity and are proposed to induce apoptosis. Thus the cleavage is proposed to be an determinant to switch from autophagy to apoptosis pathways affecting cellular homeostasis including viral infections and survival of tumor cells.

The protein resides in the cytoplasm. It is found in the golgi apparatus. The protein localises to the trans-Golgi network membrane. Its subcellular location is the endosome membrane. It localises to the endoplasmic reticulum membrane. The protein resides in the mitochondrion membrane. It is found in the cytoplasmic vesicle. The protein localises to the autophagosome. Its subcellular location is the mitochondrion. It localises to the nucleus. Functionally, plays a central role in autophagy. Acts as a core subunit of the PI3K complex that mediates formation of phosphatidylinositol 3-phosphate; different complex forms are believed to play a role in multiple membrane trafficking pathways: PI3KC3-C1 is involved in initiation of autophagosomes and PI3KC3-C2 in maturation of autophagosomes and endocytosis. Involved in regulation of degradative endocytic trafficking and required for the abscission step in cytokinesis, probably in the context of PI3KC3-C2. Essential for the formation of PI3KC3-C2 but not PI3KC3-C1 PI3K complex forms. Involved in endocytosis. May play a role in antiviral host defense. Beclin-1-C 35 kDa localized to mitochondria can promote apoptosis; it induces the mitochondrial translocation of BAX and the release of proapoptotic factors. This Rattus norvegicus (Rat) protein is Beclin-1 (Becn1).